A 156-amino-acid chain; its full sequence is ATP synthase subunit b (156 aa).

The chain crosses the membrane as a helical span at residues 11-31; the sequence is AIAFVLFVLFCMKYVWPPIMA.

Belongs to the ATPase B chain family. F-type ATPases have 2 components, F(1) - the catalytic core - and F(0) - the membrane proton channel. F(1) has five subunits: alpha(3), beta(3), gamma(1), delta(1), epsilon(1). F(0) has three main subunits: a(1), b(2) and c(10-14). The alpha and beta chains form an alternating ring which encloses part of the gamma chain. F(1) is attached to F(0) by a central stalk formed by the gamma and epsilon chains, while a peripheral stalk is formed by the delta and b chains.

The protein resides in the cell inner membrane. Functionally, f(1)F(0) ATP synthase produces ATP from ADP in the presence of a proton or sodium gradient. F-type ATPases consist of two structural domains, F(1) containing the extramembraneous catalytic core and F(0) containing the membrane proton channel, linked together by a central stalk and a peripheral stalk. During catalysis, ATP synthesis in the catalytic domain of F(1) is coupled via a rotary mechanism of the central stalk subunits to proton translocation. Its function is as follows. Component of the F(0) channel, it forms part of the peripheral stalk, linking F(1) to F(0). The polypeptide is ATP synthase subunit b (Cronobacter sakazakii (strain ATCC BAA-894) (Enterobacter sakazakii)).